The primary structure comprises 100 residues: Urease subunit gamma (100 aa).

It belongs to the urease gamma subunit family. Heterotrimer of UreA (gamma), UreB (beta) and UreC (alpha) subunits. Three heterotrimers associate to form the active enzyme.

The protein localises to the cytoplasm. The enzyme catalyses urea + 2 H2O + H(+) = hydrogencarbonate + 2 NH4(+). Its pathway is nitrogen metabolism; urea degradation; CO(2) and NH(3) from urea (urease route): step 1/1. This Acetivibrio thermocellus (strain ATCC 27405 / DSM 1237 / JCM 9322 / NBRC 103400 / NCIMB 10682 / NRRL B-4536 / VPI 7372) (Clostridium thermocellum) protein is Urease subunit gamma.